The chain runs to 118 residues: Holo-[acyl-carrier-protein] synthase (118 aa).

Mg(2+)-binding residues include Asp5 and Glu51.

The protein belongs to the P-Pant transferase superfamily. AcpS family. Mg(2+) serves as cofactor.

The protein resides in the cytoplasm. It carries out the reaction apo-[ACP] + CoA = holo-[ACP] + adenosine 3',5'-bisphosphate + H(+). Transfers the 4'-phosphopantetheine moiety from coenzyme A to a Ser of acyl-carrier-protein. This chain is Holo-[acyl-carrier-protein] synthase, found in Helicobacter pylori (strain P12).